Here is a 151-residue protein sequence, read N- to C-terminus: UPF0735 ACT domain-containing protein SAUSA300_1599 (151 aa).

Residues 74–149 (TLILYVTDIV…YVSKVELISM (76 aa)) enclose the ACT domain.

This sequence belongs to the UPF0735 family.

This is UPF0735 ACT domain-containing protein SAUSA300_1599 from Staphylococcus aureus (strain USA300).